The following is a 239-amino-acid chain: Uridylate kinase (239 aa).

13–16 contributes to the ATP binding site; it reads KVSG. Position 55 (Gly55) interacts with UMP. Gly56 and Arg60 together coordinate ATP. UMP contacts are provided by residues Asp75 and 136-143; that span reads TGNPFFTT. ATP-binding residues include Thr163, Gln164, Tyr169, and Asp172.

It belongs to the UMP kinase family. Homohexamer.

The protein resides in the cytoplasm. It catalyses the reaction UMP + ATP = UDP + ADP. It functions in the pathway pyrimidine metabolism; CTP biosynthesis via de novo pathway; UDP from UMP (UMPK route): step 1/1. With respect to regulation, inhibited by UTP. Catalyzes the reversible phosphorylation of UMP to UDP. The polypeptide is Uridylate kinase (Bartonella quintana (strain Toulouse) (Rochalimaea quintana)).